We begin with the raw amino-acid sequence, 149 residues long: Calmodulin (149 aa).

Residue A2 is modified to N-acetylalanine. 4 consecutive EF-hand domains span residues E8–N43, P44–D79, D81–K116, and L117–K149. The Ca(2+) site is built by D21, D23, D25, S27, E32, D57, D59, N61, T63, E68, D94, D96, N98, Y100, and D105. An N6,N6,N6-trimethyllysine modification is found at K116. Ca(2+) is bound by residues D130, D132, D134, Q136, and E141.

Belongs to the calmodulin family.

Its function is as follows. Calmodulin mediates the control of a large number of enzymes, ion channels and other proteins by Ca(2+). Among the enzymes to be stimulated by the calmodulin-Ca(2+) complex are a number of protein kinases and phosphatases. The sequence is that of Calmodulin from Mougeotia scalaris (Green alga).